The primary structure comprises 141 residues: Nucleoside diphosphate kinase 1 (141 aa).

Residues Lys-11, Phe-59, Arg-87, Thr-93, Arg-104, and Asn-114 each contribute to the ATP site. The active-site Pros-phosphohistidine intermediate is the His-117.

It belongs to the NDK family. As to quaternary structure, homotetramer. Requires Mg(2+) as cofactor.

The protein resides in the cytoplasm. It carries out the reaction a 2'-deoxyribonucleoside 5'-diphosphate + ATP = a 2'-deoxyribonucleoside 5'-triphosphate + ADP. It catalyses the reaction a ribonucleoside 5'-diphosphate + ATP = a ribonucleoside 5'-triphosphate + ADP. Its function is as follows. Major role in the synthesis of nucleoside triphosphates other than ATP. The ATP gamma phosphate is transferred to the NDP beta phosphate via a ping-pong mechanism, using a phosphorylated active-site intermediate. The polypeptide is Nucleoside diphosphate kinase 1 (Protochlamydia amoebophila (strain UWE25)).